Consider the following 20-residue polypeptide: Thylakoid lumenal 18.4 kDa protein (20 aa).

The protein resides in the plastid. It is found in the chloroplast thylakoid lumen. This is Thylakoid lumenal 18.4 kDa protein from Spinacia oleracea (Spinach).